The following is a 236-amino-acid chain: 7-cyano-7-deazaguanine synthase (236 aa).

7–17 lines the ATP pocket; sequence CSGGLDSVSLA. The Zn(2+) site is built by cysteine 185, cysteine 193, cysteine 196, and cysteine 199.

It belongs to the QueC family. Requires Zn(2+) as cofactor.

It carries out the reaction 7-carboxy-7-deazaguanine + NH4(+) + ATP = 7-cyano-7-deazaguanine + ADP + phosphate + H2O + H(+). The protein operates within purine metabolism; 7-cyano-7-deazaguanine biosynthesis. In terms of biological role, catalyzes the ATP-dependent conversion of 7-carboxy-7-deazaguanine (CDG) to 7-cyano-7-deazaguanine (preQ(0)). The chain is 7-cyano-7-deazaguanine synthase from Rhizobium meliloti (strain 1021) (Ensifer meliloti).